Here is a 99-residue protein sequence, read N- to C-terminus: Large ribosomal subunit protein uL23 (99 aa).

The protein belongs to the universal ribosomal protein uL23 family. In terms of assembly, part of the 50S ribosomal subunit. Contacts protein L29, and trigger factor when it is bound to the ribosome.

Functionally, one of the early assembly proteins it binds 23S rRNA. One of the proteins that surrounds the polypeptide exit tunnel on the outside of the ribosome. Forms the main docking site for trigger factor binding to the ribosome. This Pseudomonas aeruginosa (strain LESB58) protein is Large ribosomal subunit protein uL23.